The chain runs to 190 residues: Elongation factor P (190 aa).

The protein belongs to the elongation factor P family.

The protein localises to the cytoplasm. It functions in the pathway protein biosynthesis; polypeptide chain elongation. Functionally, involved in peptide bond synthesis. Stimulates efficient translation and peptide-bond synthesis on native or reconstituted 70S ribosomes in vitro. Probably functions indirectly by altering the affinity of the ribosome for aminoacyl-tRNA, thus increasing their reactivity as acceptors for peptidyl transferase. This chain is Elongation factor P, found in Hyphomonas neptunium (strain ATCC 15444).